Reading from the N-terminus, the 592-residue chain is Sodium- and chloride-dependent transporter XTRP3 (592 aa).

The Cytoplasmic portion of the chain corresponds to 1–5; that stretch reads MEKAR. A helical transmembrane segment spans residues 6-26; sequence PLWANSLQFVFACISYAVGLG. At 27-42 the chain is on the extracellular side; that stretch reads NVWRFPYLCQMYGGGS. Residues 43–63 traverse the membrane as a helical segment; it reads FLVPYIIMLIVEGMPLLYLEL. Over 64-79 the chain is Cytoplasmic; sequence AVGQRMRQGSIGAWRT. The chain crosses the membrane as a helical span at residues 80 to 100; that stretch reads ISPYLSGVGVASVVVSFFLSM. Topologically, residues 101–165 are extracellular; that stretch reads YYNVINAWAF…ISPSLQENGG (65 aa). Residue asparagine 131 is glycosylated (N-linked (GlcNAc...) asparagine). A helical membrane pass occupies residues 166-186; that stretch reads VQWEPALCLLLAWLVVYLCIL. The Cytoplasmic segment spans residues 187–194; sequence RGTESTGK. A helical transmembrane segment spans residues 195-215; it reads VVYFTASLPYCVLIIYLIRGL. Residues 216–241 are Extracellular-facing; sequence TLHGATNGLMYMFTPKIEQLANPKAW. Residues 242-262 traverse the membrane as a helical segment; that stretch reads INAATQIFFSLGLGFGSLIAF. Topologically, residues 263–276 are cytoplasmic; that stretch reads ASYNEPSNNCQKHA. Residues 277–297 form a helical membrane-spanning segment; the sequence is IIVSLINSFTSIFASIVTFSI. Residues 298–389 lie on the Extracellular side of the membrane; the sequence is YGFKATFNYE…EAIKNMEVSQ (92 aa). N-linked (GlcNAc...) asparagine glycosylation is present at asparagine 357. Residues 390–410 form a helical membrane-spanning segment; it reads LWSVLYFFMLLMLGIGSMLGN. Residues 411-431 lie on the Cytoplasmic side of the membrane; sequence TAAILTPLTDSKIISSHLPKE. A helical membrane pass occupies residues 432 to 452; the sequence is AISGLVCLVNCAIGMVFTMEA. Residues 453–465 are Extracellular-facing; the sequence is GNYWFDIFNDYAA. A helical transmembrane segment spans residues 466–486; the sequence is TLSLLLIVLVETIAVCYVYGL. Residues 487-504 lie on the Cytoplasmic side of the membrane; the sequence is RRFESDLKAMTGRAVSWY. A helical transmembrane segment spans residues 505–525; the sequence is WKVMWAGVSPLLIVSLFVFYL. Over 526 to 554 the chain is Extracellular; sequence SDYILTGTLKYQAWDASQGQLVTKDYPAY. A helical membrane pass occupies residues 555 to 575; sequence ALAVIGLLVASSTMCIPLAAL. Topologically, residues 576 to 592 are cytoplasmic; it reads GTFVQRRLKRGDADPVA.

The protein belongs to the sodium:neurotransmitter symporter (SNF) (TC 2.A.22) family. SLC6A20 subfamily. As to expression, kidney and small intestine. Expressed in the S3 segment of the proximal tubule. Expressed in neurons.

It localises to the apical cell membrane. It carries out the reaction L-proline(out) + chloride(out) + 2 Na(+)(out) = L-proline(in) + chloride(in) + 2 Na(+)(in). The catalysed reaction is L-pipecolate(out) + chloride(out) + 2 Na(+)(out) = L-pipecolate(in) + chloride(in) + 2 Na(+)(in). The enzyme catalyses sarcosine(out) + chloride(out) + 2 Na(+)(out) = sarcosine(in) + chloride(in) + 2 Na(+)(in). It catalyses the reaction N-methyl-L-proline(out) + chloride(out) + 2 Na(+)(out) = N-methyl-L-proline(in) + chloride(in) + 2 Na(+)(in). It carries out the reaction 2-methyl-2-(methylamino)propanoate(out) + chloride(out) + 2 Na(+)(out) = 2-methyl-2-(methylamino)propanoate(in) + chloride(in) + 2 Na(+)(in). The catalysed reaction is glycine betaine(out) + chloride(out) + 2 Na(+)(out) = glycine betaine(in) + chloride(in) + 2 Na(+)(in). The enzyme catalyses glycine(out) + chloride(out) + 2 Na(+)(out) = glycine(in) + chloride(in) + 2 Na(+)(in). Its function is as follows. Mediates the Na(+)- and Cl(-)-dependent uptake of imino acids such as L-proline, N-methyl-L-proline and pipecolate as well as N-methylated amino acids. Also transports glycine, regulates proline and glycine homeostasis in the brain playing a role in the modulation of NMDAR currents. This Homo sapiens (Human) protein is Sodium- and chloride-dependent transporter XTRP3.